A 326-amino-acid chain; its full sequence is GATA zinc finger domain-containing protein 21 (326 aa).

2 disordered regions span residues 1–102 and 145–238; these read MFRN…NNNN and QNQS…TPER. Composition is skewed to low complexity over residues 17-102 and 148-164; these read NTNL…NNNN and SSSS…GSSA. Positions 165–189 are enriched in polar residues; that stretch reads LNSINNNNYSPTTSSLNRVRNQYNQ. Over residues 193-218 the composition is skewed to acidic residues; that stretch reads DEEDDDYDNGAEDGFDYDGDDNEDGS. The GATA-type zinc-finger motif lies at 239–266; the sequence is CSNCKITHSSYWRRITVNGQKLDFCNAC. The tract at residues 277–326 is disordered; the sequence is IKESKQRHSIQNIMNQNQEEEEEEREEEEEEEEEEDEEFETLEEEEEDDE. Acidic residues predominate over residues 294 to 326; the sequence is QEEEEEEREEEEEEEEEEDEEFETLEEEEEDDE.

This Dictyostelium discoideum (Social amoeba) protein is GATA zinc finger domain-containing protein 21 (gtaU).